The sequence spans 1133 residues: Exportin-4 (1133 aa).

Belongs to the exportin family. As to quaternary structure, interacts with Ran and cargo proteins in a GTP-dependent manner.

The protein localises to the cytoplasm. The protein resides in the nucleus. In terms of biological role, mediates the nuclear export of proteins (cargos). In the nucleus binds cooperatively to its cargo and to the GTPase Ran in its active GTP-bound form. Docking of this trimeric complex to the nuclear pore complex (NPC) is mediated through binding to nucleoporins. Upon transit of a nuclear export complex into the cytoplasm, disassembling of the complex and hydrolysis of Ran-GTP to Ran-GDP cause release of the cargo from the export receptor. Xpo4 then return to the nuclear compartment and mediate another round of transport. The directionality of nuclear export is thought to be conferred by an asymmetric distribution of the GTP- and GDP-bound forms of Ran between the cytoplasm and nucleus. This Dictyostelium discoideum (Social amoeba) protein is Exportin-4 (xpo4).